Consider the following 63-residue polypeptide: Large ribosomal subunit protein bL28 (63 aa).

The protein belongs to the bacterial ribosomal protein bL28 family.

The chain is Large ribosomal subunit protein bL28 from Geobacter sulfurreducens (strain ATCC 51573 / DSM 12127 / PCA).